A 227-amino-acid chain; its full sequence is 7-cyano-7-deazaguanine synthase (227 aa).

7–17 provides a ligand contact to ATP; that stretch reads LSGGLDSSTIL. C191, C199, C202, and C205 together coordinate Zn(2+).

Belongs to the QueC family. Zn(2+) is required as a cofactor.

It catalyses the reaction 7-carboxy-7-deazaguanine + NH4(+) + ATP = 7-cyano-7-deazaguanine + ADP + phosphate + H2O + H(+). It participates in purine metabolism; 7-cyano-7-deazaguanine biosynthesis. In terms of biological role, catalyzes the ATP-dependent conversion of 7-carboxy-7-deazaguanine (CDG) to 7-cyano-7-deazaguanine (preQ(0)). This is 7-cyano-7-deazaguanine synthase from Trichormus variabilis (strain ATCC 29413 / PCC 7937) (Anabaena variabilis).